We begin with the raw amino-acid sequence, 1448 residues long: MPITKAEAQGVTRAFVRDYPGALELAYKFREDAAELYGPRAAEVPADMKGGYVPKETLHAGRAYRGRVDVPLQNVESASDLLMTLRHEVLGHYGANTFAPGEKRALLDGLAAARNEPTLKPLWDDVNRRYAGQSLDVRAEEVFALHCEGIEPSQHQVADQVQQRGQQSFTETCIARVRPMQADDLHNIVCMVAQGLRDRSRTQQNFPQFNELFRRDENMEPKKPFHEVVAEKLIEQLKAGTAPWQKPWEPGEPNAYLPMNPTTGKRYKGINAIHLMAQGRSDARWMTYKQAAAVGAQVRKGEKGTPVQYWKFSEEQDKLDDSGRPVLDAKGQPVKETVMLERPRVFFATVFNGEQIDGLPPLQPKKEQTWNAVERAEHILKASGATITHAAGDRAFYRPSTDSITLPERGQFPSSDRYYATALHELGHWTGHASRLDRDLAHPFGSEGYAKEELRAEIASMIVGDELGIGHDPGQHAAYVGSWIKALQDEPLEVFRAAADAEKIHDYVLAFEQKQVQEQDQQQSQAQDEAVAQALAVDIAEVLDNPDVSFSHYQAFQGDTLEDALRSRGLETVGSITGTDPEQFYAVAHDRLSPVFGIDPSHTDTDNAYLERKGLAQEFANMAEQLHLAQQLQQHGEQIVSSIDAEARWSDGQRIFAFHDQDGEPHQVRSLDELNNYAPDQLMALPALTQQQAAVADQEANMTPPTIDQAAALLAAHPADAVQGIEQAAAARRQLAAGEIDGQAFADATRQHLGVELPPDWSGELRIVGVAEQDGQTVDAAQAGIEPQAFQVYARKADAQFGEDAFAFVAGTRTEGQAEALAERLHLVDALGTDNQHERAAKLARVQEERVRRDPNATEEDISAAKEARKTAEASAMLNDSDAQRRAAELERQERDRQQAQPQAEKPERQYINVPYKEKDEAKSLGARWDRQQQSWYVPPGTDAAPFAKWAQGAATAAVEPRSAQPAPEAQGEAQKPAQQAQQARQYLAVPYEQRNAAKAAGALWDKAAKSWYVGPRADAAKLERWKPENVQAQQGPAMTPREEFAEAMRSAGLFTGSNAQGDHPIMDGKRHRVPVEGGKKGALDGFYVGHLDGHPAGRIINNKTGTDITWKSKGYALSDQEKAKLQAEAAEKLAQRAVEQDKAQEATAQRVGRQMADLVPIEQPTPYLQAKGIQAQAGVMTDREGQKTYIPAFDAEGKQWTMQYIQEDGTKRFAKDSKKEGCFHPVGGMDALAAAPALVISEGYATAAQVAEAVGHATVAAFDSGNLEAVAKALHAKFPDKPVIIAGDDDRHLVMTHGNNPGREKAEAAAQAVGGKAIFPIFAPAENTYPRDLPAITPDSFKTHLRAEQRLADAAAGKVELAGDEAAKLKASMLSGAQIAALSTMKQHTDFNDLAHKSELGIEGVKRQIGAAISQVQRDEQQHQEQKHVEKKQQQIEQRPRRAARIG.

Basic and acidic residues-rich tracts occupy residues 844–856 (ARVQ…RDPN), 863–872 (SAAKEARKTA), and 882–898 (DAQR…RDRQ). Disordered stretches follow at residues 844–915 (ARVQ…INVP) and 952–982 (QGAA…QQAQ). The span at 964–982 (AQPAPEAQGEAQKPAQQAQ) shows a compositional bias: low complexity. A Toprim domain is found at 1237–1325 (PALVISEGYA…GKAIFPIFAP (89 aa)). The tract at residues 1414 to 1448 (ISQVQRDEQQHQEQKHVEKKQQQIEQRPRRAARIG) is disordered. Basic and acidic residues predominate over residues 1418-1441 (QRDEQQHQEQKHVEKKQQQIEQRP).

In terms of biological role, required for autonomous replication in E.coli. Transferred into the recipient cell during bacterial conjugation. Catalyzes the synthesis of short oligoribonucleotide primers with CpA or pCpA at their 5'-termini on a single-stranded template DNA. The chain is DNA primase TraC (traC) from Escherichia coli.